We begin with the raw amino-acid sequence, 112 residues long: Integration host factor subunit alpha (112 aa).

The protein belongs to the bacterial histone-like protein family. In terms of assembly, heterodimer of an alpha and a beta chain.

Its function is as follows. This protein is one of the two subunits of integration host factor, a specific DNA-binding protein that functions in genetic recombination as well as in transcriptional and translational control. In Rhizobium rhizogenes (strain K84 / ATCC BAA-868) (Agrobacterium radiobacter), this protein is Integration host factor subunit alpha.